The chain runs to 294 residues: Nucleotide-binding protein Cbei_4857 (294 aa).

8–15 serves as a coordination point for ATP; that stretch reads GLSGAGKT. 59–62 provides a ligand contact to GTP; that stretch reads DIRG.

It belongs to the RapZ-like family.

Displays ATPase and GTPase activities. This chain is Nucleotide-binding protein Cbei_4857, found in Clostridium beijerinckii (strain ATCC 51743 / NCIMB 8052) (Clostridium acetobutylicum).